The primary structure comprises 2146 residues: YLP motif-containing protein 1 (2146 aa).

Disordered regions lie at residues methionine 1–lysine 381 and proline 562–glutamine 880. Pro residues predominate over residues tyrosine 14 to alanine 26. 2 stretches are compositionally biased toward low complexity: residues leucine 27–serine 48 and leucine 58–histidine 79. Composition is skewed to pro residues over residues histidine 80–methionine 92, glutamine 101–proline 113, proline 147–tyrosine 157, methionine 165–tyrosine 175, and tyrosine 183–serine 194. The segment covering proline 195 to glutamine 237 has biased composition (low complexity). 2 stretches are compositionally biased toward polar residues: residues asparagine 256 to alanine 279 and serine 286 to arginine 308. Over residues threonine 309 to glycine 319 the composition is skewed to basic residues. Basic and acidic residues predominate over residues aspartate 325–valine 334. Composition is skewed to pro residues over residues glutamate 349–glutamate 368, proline 562–proline 579, and glycine 586–isoleucine 642. Low complexity predominate over residues proline 643 to proline 663. The span at alanine 692 to alanine 702 shows a compositional bias: polar residues. Lysine 735 bears the N6-methyllysine mark. Serine 756 is subject to Phosphoserine. Positions arginine 758 to lysine 806 are enriched in basic and acidic residues. At arginine 814 the chain carries Omega-N-methylarginine. Polar residues-rich tracts occupy residues phenylalanine 820–proline 835 and aspartate 868–glutamine 880. Serine 829 carries the post-translational modification Phosphoserine. Position 831 is an omega-N-methylarginine (arginine 831). Residue lysine 891 forms a Glycyl lysine isopeptide (Lys-Gly) (interchain with G-Cter in SUMO2) linkage. Disordered regions lie at residues alanine 895–alanine 1211 and asparagine 1243–tryptophan 1351. 2 stretches are compositionally biased toward polar residues: residues alanine 896–proline 909 and asparagine 923–threonine 933. Residue lysine 983 forms a Glycyl lysine isopeptide (Lys-Gly) (interchain with G-Cter in SUMO1); alternate linkage. Lysine 983 is covalently cross-linked (Glycyl lysine isopeptide (Lys-Gly) (interchain with G-Cter in SUMO2); alternate). Basic and acidic residues-rich tracts occupy residues asparagine 994–glycine 1012, arginine 1027–leucine 1036, and lysine 1053–valine 1093. Lysine 1053 participates in a covalent cross-link: Glycyl lysine isopeptide (Lys-Gly) (interchain with G-Cter in SUMO1); alternate. A Glycyl lysine isopeptide (Lys-Gly) (interchain with G-Cter in SUMO2); alternate cross-link involves residue lysine 1053. 2 positions are modified to phosphoserine: serine 1100 and serine 1119. Composition is skewed to basic and acidic residues over residues glycine 1129–alanine 1211 and asparagine 1243–tryptophan 1264. Over residues aspartate 1266–glutamate 1276 the composition is skewed to acidic residues. Residues aspartate 1277 to isoleucine 1328 are compositionally biased toward basic and acidic residues. The segment covering serine 1330–proline 1342 has biased composition (pro residues). The residue at position 1402 (serine 1402) is a Phosphoserine. Disordered stretches follow at residues proline 1407–serine 1438, glutamine 1469–arginine 1573, and isoleucine 1602–arginine 1828. The span at alanine 1417 to methionine 1430 shows a compositional bias: low complexity. A compositionally biased stretch (basic and acidic residues) spans glutamine 1469–glycine 1480. The segment covering methionine 1505–lysine 1520 has biased composition (pro residues). The span at proline 1521–valine 1539 shows a compositional bias: low complexity. Composition is skewed to pro residues over residues threonine 1540–isoleucine 1562 and proline 1606–valine 1636. Lysine 1652 participates in a covalent cross-link: Glycyl lysine isopeptide (Lys-Gly) (interchain with G-Cter in SUMO2). Composition is skewed to basic and acidic residues over residues isoleucine 1662–phenylalanine 1696, alanine 1704–valine 1774, glycine 1783–methionine 1793, and arginine 1809–arginine 1828. Lysine 1710 is covalently cross-linked (Glycyl lysine isopeptide (Lys-Gly) (interchain with G-Cter in SUMO2)). An involved in interaction with PPP1CA region spans residues lysine 2096–aspartate 2103.

As to quaternary structure, interacts with PPP1CA and NCOA5. Forms a complex with ILF2, ILF3, KHDRBS1, RBMX, NCOA5 and PPP1CA. As to expression, expressed in neuronal, neuroblastoma and embryonic kidney cell lines (at protein level).

The protein resides in the nucleus. Its subcellular location is the nucleus speckle. Plays a role in the reduction of telomerase activity during differentiation of embryonic stem cells by binding to the core promoter of TERT and controlling its down-regulation. This is YLP motif-containing protein 1 (YLPM1) from Homo sapiens (Human).